Here is a 176-residue protein sequence, read N- to C-terminus: Transcription factor E (176 aa).

The HTH TFE/IIEalpha-type domain maps to 5-89 (IDQLMKDMAR…YWKANVDQIN (85 aa)).

This sequence belongs to the TFE family. In terms of assembly, monomer. Interaction with RNA polymerase subunits RpoF and RpoE is necessary for Tfe stimulatory transcription activity. Able to interact with Tbp and RNA polymerase in the absence of DNA promoter. Interacts both with the preinitiation and elongation complexes.

In terms of biological role, transcription factor that plays a role in the activation of archaeal genes transcribed by RNA polymerase. Facilitates transcription initiation by enhancing TATA-box recognition by TATA-box-binding protein (Tbp), and transcription factor B (Tfb) and RNA polymerase recruitment. Not absolutely required for transcription in vitro, but particularly important in cases where Tbp or Tfb function is not optimal. It dynamically alters the nucleic acid-binding properties of RNA polymerases by stabilizing the initiation complex and destabilizing elongation complexes. Seems to translocate with the RNA polymerase following initiation and acts by binding to the non template strand of the transcription bubble in elongation complexes. In Metallosphaera sedula (strain ATCC 51363 / DSM 5348 / JCM 9185 / NBRC 15509 / TH2), this protein is Transcription factor E.